A 527-amino-acid polypeptide reads, in one-letter code: DUF21 domain-containing protein At1g47330 (527 aa).

At 1-15 the chain is on the extracellular side; the sequence is MSSDIPCCGTTFSLY. One can recognise a CNNM transmembrane domain in the interval 8-191; the sequence is CGTTFSLYVV…GKGGDLTTDE (184 aa). A helical membrane pass occupies residues 16 to 36; the sequence is VVIIIALVAFAGLMAGLTLGL. Residues 37–70 are Cytoplasmic-facing; it reads MSLGLVDLEVLIKSGRPQDRINAGKIFPVVKNQH. A helical membrane pass occupies residues 71-91; that stretch reads LLLCTLLIGNSMAMEALPIFL. Topologically, residues 92-93 are extracellular; sequence DK. Residues 94-114 form a helical membrane-spanning segment; the sequence is IVPPWLAILLSVTLILVFGEI. The Cytoplasmic segment spans residues 115–126; the sequence is MPQAVCTRYGLK. A helical membrane pass occupies residues 127–147; that stretch reads VGAIMAPFVRVLLVLFFPISY. The Extracellular portion of the chain corresponds to 148–527; it reads PISKVLDWML…PKHEESTQTL (380 aa). 3 consecutive CBS domains span residues 210 to 271, 274 to 334, and 366 to 435; these read MTPI…EVPL, MSMR…TKDE, and KSEN…ILDE. Disordered stretches follow at residues 307–335, 358–384, and 464–527; these read KDLD…KDEL, ETGD…LLAA, and ITQS…TQTL. At Ser-315 the chain carries Phosphoserine. Residues 358–369 show a composition bias toward basic and acidic residues; that stretch reads ETGDAKSGKSEN. Over residues 464–501 the composition is skewed to low complexity; that stretch reads ITQSSSGSTSPNQTSHMATPDSSPTTKPSNSSPTRKPS. Asn-475 is a glycosylation site (N-linked (GlcNAc...) asparagine). The segment covering 502–515 has biased composition (polar residues); that stretch reads VSSPTREPSDSSHS. A compositionally biased stretch (basic and acidic residues) spans 518–527; that stretch reads PKHEESTQTL.

It is found in the membrane. This Arabidopsis thaliana (Mouse-ear cress) protein is DUF21 domain-containing protein At1g47330 (CBSDUF7).